The following is a 231-amino-acid chain: Axial regulator YABBY 4 (231 aa).

The segment at 26 to 53 (CGFCTTILLVSVPFTSLSMVVTVRCGHC) adopts a C4-type zinc-finger fold. Disordered regions lie at residues 98–120 (KVNQEKENSPTTLVSSSDNEDED) and 211–231 (NNGFRERKAQRHSIWGKSPFE).

Belongs to the YABBY family. Interacts with SPL/NZZ.

It is found in the nucleus. In terms of biological role, essential for the formation and the abaxial-adaxial asymmetric growth of the ovule outer integument. This Arabidopsis thaliana (Mouse-ear cress) protein is Axial regulator YABBY 4 (YAB4).